The sequence spans 117 residues: Anti-sigma F factor antagonist (117 aa).

An STAS domain is found at 3 to 113 (LGIDMNVKES…QSEQQALLTL (111 aa)). Ser-58 carries the post-translational modification Phosphoserine.

It belongs to the anti-sigma-factor antagonist family. Phosphorylated by SpoIIAB on a serine residue.

In the phosphorylated form it could act as an anti-anti-sigma factor that counteracts SpoIIAB and thus releases sigma f from inhibition. The protein is Anti-sigma F factor antagonist (spoIIAA) of Bacillus subtilis (strain 168).